Here is a 314-residue protein sequence, read N- to C-terminus: Homoserine kinase (314 aa).

Residue P95–S105 participates in ATP binding.

This sequence belongs to the GHMP kinase family. Homoserine kinase subfamily.

The protein resides in the cytoplasm. It carries out the reaction L-homoserine + ATP = O-phospho-L-homoserine + ADP + H(+). Its pathway is amino-acid biosynthesis; L-threonine biosynthesis; L-threonine from L-aspartate: step 4/5. Functionally, catalyzes the ATP-dependent phosphorylation of L-homoserine to L-homoserine phosphate. The polypeptide is Homoserine kinase (Rhodococcus erythropolis (strain PR4 / NBRC 100887)).